Reading from the N-terminus, the 344-residue chain is Selenide, water dikinase (344 aa).

Residue C16 is part of the active site. ATP-binding positions include K19 and 47 to 49 (SRD). Mg(2+) is bound at residue D50. Residues D67, D90, and 138–140 (GHS) each bind ATP. D90 is a Mg(2+) binding site. Residue D226 participates in Mg(2+) binding.

Belongs to the selenophosphate synthase 1 family. Class I subfamily. In terms of assembly, homodimer. Requires Mg(2+) as cofactor.

The enzyme catalyses hydrogenselenide + ATP + H2O = selenophosphate + AMP + phosphate + 2 H(+). Functionally, synthesizes selenophosphate from selenide and ATP. The protein is Selenide, water dikinase of Bordetella bronchiseptica (strain ATCC BAA-588 / NCTC 13252 / RB50) (Alcaligenes bronchisepticus).